We begin with the raw amino-acid sequence, 161 residues long: Protein ilm1 (161 aa).

The Cytoplasmic segment spans residues 1 to 6; it reads MLFSFR. A helical transmembrane segment spans residues 7 to 27; sequence AIVLFYCCMLTFAGIGFLWNP. The Lumenal portion of the chain corresponds to 28–56; sequence KFVVESGLVALIGASMEVKPLIVTQDNLS. A helical membrane pass occupies residues 57–77; that stretch reads TLALSGLVFLILGMIYTISLL. At 78–81 the chain is on the cytoplasmic side; it reads QSNF. The helical transmembrane segment at 82-102 threads the bilayer; sequence LFFSGITPIRAIFDFILTGFI. Topologically, residues 103 to 112 are lumenal; the sequence is YLKKEHIASN. Residues 113-133 traverse the membrane as a helical segment; sequence SLTFTFAFCDLMWQFWMFAAM. Residues 134-161 are Cytoplasmic-facing; sequence SEERAKYLKNQKKAEELAARKAREVEES.

It belongs to the ILM1 family.

It localises to the endoplasmic reticulum. Its subcellular location is the membrane. In Schizosaccharomyces pombe (strain 972 / ATCC 24843) (Fission yeast), this protein is Protein ilm1.